Consider the following 307-residue polypeptide: Taste receptor type 2 member 10 (307 aa).

At 1 to 6 (MLSVVE) the chain is on the extracellular side. A helical transmembrane segment spans residues 7-27 (GILILVVISESVFGVLGNGFI). The Cytoplasmic segment spans residues 28–42 (GLVNCIDCAKNKLST). The helical transmembrane segment at 43-63 (IGFILTGLAISRIFLIWIIIT) threads the bilayer. Over 64 to 100 (DGFIQIFSPDVYASGNLIEYISYFWVITNQSSIWFAT) the chain is Extracellular. Residue Asn92 is glycosylated (N-linked (GlcNAc...) asparagine). A helical transmembrane segment spans residues 101–121 (SLSIFYFLKIANFSNYIFLWL). The Cytoplasmic segment spans residues 122–126 (KSRIN). Residues 127–147 (RVLPLLMGFLLISCLLNFAYI) form a helical membrane-spanning segment. The Extracellular portion of the chain corresponds to 148 to 179 (VKILNDLKMKNDTVWRLNMYKSEYFIKQLLLN). The N-linked (GlcNAc...) asparagine glycan is linked to Asn158. A helical membrane pass occupies residues 180-200 (LGVIFFFTLSLITSVLLIISL). Over 201 to 227 (WRHNRQMQSNVTGLRDSITEAHVKAMK) the chain is Cytoplasmic. Residues 228–248 (VLISFIILFILYFIGIAIEIS) traverse the membrane as a helical segment. At 249–257 (YFTVPENKL) the chain is on the extracellular side. A helical membrane pass occupies residues 258-278 (LLIFGMTTTAIYPWGHSFILI). The Cytoplasmic portion of the chain corresponds to 279–307 (LGNSKLKQASLRVLQQLKCCEERKNLRAT).

Belongs to the G-protein coupled receptor T2R family.

It localises to the membrane. Its function is as follows. Receptor that may play a role in the perception of bitterness and is gustducin-linked. May play a role in sensing the chemical composition of the gastrointestinal content. The activity of this receptor may stimulate alpha gustducin, mediate PLC-beta-2 activation and lead to the gating of TRPM5. In Papio hamadryas (Hamadryas baboon), this protein is Taste receptor type 2 member 10 (TAS2R10).